Here is a 499-residue protein sequence, read N- to C-terminus: Glutamate--tRNA ligase (499 aa).

The short motif at 10-20 (PSPTGTPHVGM) is the 'HIGH' region element. A 'KMSKS' region motif is present at residues 255 to 259 (KLSKR). Residue K258 participates in ATP binding.

This sequence belongs to the class-I aminoacyl-tRNA synthetase family. Glutamate--tRNA ligase type 1 subfamily. Monomer.

It localises to the cytoplasm. The enzyme catalyses tRNA(Glu) + L-glutamate + ATP = L-glutamyl-tRNA(Glu) + AMP + diphosphate. Functionally, catalyzes the attachment of glutamate to tRNA(Glu) in a two-step reaction: glutamate is first activated by ATP to form Glu-AMP and then transferred to the acceptor end of tRNA(Glu). The sequence is that of Glutamate--tRNA ligase from Corynebacterium urealyticum (strain ATCC 43042 / DSM 7109).